The primary structure comprises 601 residues: Ribosomal oxygenase 1 (601 aa).

A compositionally biased stretch (basic and acidic residues) spans 1–11 (MAACGAEERQR). The disordered stretch occupies residues 1–149 (MAACGAEERQ…PGGGGVPGLL (149 aa)). Residues 61-70 (ERAAPPQGAA) show a composition bias toward low complexity. The span at 73–87 (DRVERAGSSEAKQGD) shows a compositional bias: basic and acidic residues. The 146-residue stretch at 254–399 (CSLRLLSPQA…DFLEKLLPAA (146 aa)) folds into the JmjC domain. The Fe cation site is built by His-300, Asp-302, and His-365.

The protein belongs to the ROX family. NO66 subfamily. Fe(2+) is required as a cofactor.

The protein resides in the nucleus. It is found in the nucleolus. It localises to the nucleoplasm. The enzyme catalyses N(6),N(6)-dimethyl-L-lysyl(36)-[histone H3] + 2 2-oxoglutarate + 2 O2 = L-lysyl(36)-[histone H3] + 2 formaldehyde + 2 succinate + 2 CO2. It catalyses the reaction N(6)-methyl-L-lysyl-[protein] + 2-oxoglutarate + O2 = L-lysyl-[protein] + formaldehyde + succinate + CO2. It carries out the reaction L-histidyl-[protein] + 2-oxoglutarate + O2 = (3S)-3-hydroxy-L-histidyl-[protein] + succinate + CO2. Oxygenase that can act as both a histone lysine demethylase and a ribosomal histidine hydroxylase. Specifically demethylates 'Lys-4' (H3K4me) and 'Lys-36' (H3K36me) of histone H3, thereby playing a central role in histone code. Preferentially demethylates trimethylated H3 'Lys-4' (H3K4me3) and monomethylated H3 'Lys-4' (H3K4me1) residues, while it has weaker activity for dimethylated H3 'Lys-36' (H3K36me2). Also catalyzes demethylation of non-histone proteins. Also catalyzes the hydroxylation of 60S ribosomal protein L8 on 'His-216', thereby playing a role in ribosome biogenesis. In Gallus gallus (Chicken), this protein is Ribosomal oxygenase 1 (RIOX1).